A 622-amino-acid chain; its full sequence is Chaperone protein HscA homolog (622 aa).

The protein belongs to the heat shock protein 70 family.

In terms of biological role, chaperone involved in the maturation of iron-sulfur cluster-containing proteins. Has a low intrinsic ATPase activity which is markedly stimulated by HscB. This is Chaperone protein HscA homolog from Delftia acidovorans (strain DSM 14801 / SPH-1).